The sequence spans 836 residues: Pentatricopeptide repeat-containing protein At1g79490, mitochondrial (836 aa).

A mitochondrion-targeting transit peptide spans 1-85 (MIRGRTAKVI…QCRSIVRRFC (85 aa)). 12 PPR repeats span residues 204–238 (SDEC…SSSH), 242–276 (SFNA…GCKI), 277–311 (DTQT…DSLL), 312–346 (DGST…KLRP), 347–381 (SFSV…GHRP), 382–416 (SATM…GFRP), 417–451 (NFGL…GFLP), 452–486 (TPST…GLRP), 487–521 (GLSS…GYSV), 528–555 (VLMI…GIKT), 556–590 (NNFI…AGKV), and 591–625 (DLVL…KHKA). Residues 710–786 (LDVRNLSVGA…APGELVMEWF (77 aa)) enclose the Smr domain.

Belongs to the PPR family. P subfamily.

The protein localises to the mitochondrion. The sequence is that of Pentatricopeptide repeat-containing protein At1g79490, mitochondrial (EMB2217) from Arabidopsis thaliana (Mouse-ear cress).